We begin with the raw amino-acid sequence, 177 residues long: Immunity protein CdiI-YPIII (177 aa).

In terms of assembly, interacts with the C-terminal DNase fragment (residues 954-1077) of cognate toxin CdiA-YPIII.

Its function is as follows. Immunity protein component of a toxin-immunity protein module, which functions as a cellular contact-dependent growth inhibition (CDI) system. CDI modules allow bacteria to communicate with and inhibit the growth of closely related neighboring bacteria in a contact-dependent fashion. Neutralizes the toxic activity of cognate toxin CdiA-YPIII (residues 954-1077). Does not inhibit toxic activity of CdiA from other toxin-immunity modules. This is Immunity protein CdiI-YPIII from Yersinia pseudotuberculosis serotype O:3 (strain YPIII).